Reading from the N-terminus, the 288-residue chain is Serpentine receptor class gamma-1 (288 aa).

Transmembrane regions (helical) follow at residues Leu-25–Ile-45, Phe-59–Phe-79, Phe-118–Leu-138, Leu-148–Ile-168, Phe-197–Ile-217, Val-238–Leu-258, and Ile-268–Met-288.

Belongs to the nematode receptor-like protein srg family.

The protein localises to the membrane. The protein is Serpentine receptor class gamma-1 (srg-1) of Caenorhabditis elegans.